Consider the following 278-residue polypeptide: Probable ribosomal RNA small subunit methyltransferase A (278 aa).

S-adenosyl-L-methionine contacts are provided by Asn-23, Leu-25, Gly-50, Glu-71, Asp-95, and Asn-110.

Belongs to the class I-like SAM-binding methyltransferase superfamily. rRNA adenine N(6)-methyltransferase family. RsmA subfamily.

The protein resides in the cytoplasm. Its function is as follows. Specifically dimethylates two adjacent adenosines in the loop of a conserved hairpin near the 3'-end of 16S rRNA in the 30S particle. May play a critical role in biogenesis of 30S subunits. This Thermococcus gammatolerans (strain DSM 15229 / JCM 11827 / EJ3) protein is Probable ribosomal RNA small subunit methyltransferase A.